Here is a 107-residue protein sequence, read N- to C-terminus: U1-lycotoxin-Ls1e (107 aa).

Positions 1–20 (MMKVLVVFALLVTLISYSSS) are cleaved as a signal peptide. Residues 21 to 41 (EGIDDLEADELLSLMANEQTR) constitute a propeptide that is removed on maturation. Disulfide bonds link C44-C59, C51-C68, C58-C86, and C70-C84.

This sequence belongs to the neurotoxin 19 (CSTX) family. 04 (U1-Lctx) subfamily. In terms of tissue distribution, expressed by the venom gland.

It is found in the secreted. The sequence is that of U1-lycotoxin-Ls1e from Lycosa singoriensis (Wolf spider).